Consider the following 229-residue polypeptide: Potassium/proton antiporter CemA (229 aa).

A run of 3 helical transmembrane segments spans residues 6 to 26, 107 to 127, and 189 to 209; these read AFIP…ISLC, ILHF…SFWG, and ILSG…KYWI.

It belongs to the CemA family.

It localises to the plastid. The protein resides in the chloroplast inner membrane. It carries out the reaction K(+)(in) + H(+)(out) = K(+)(out) + H(+)(in). Functionally, contributes to K(+)/H(+) antiport activity by supporting proton efflux to control proton extrusion and homeostasis in chloroplasts in a light-dependent manner to modulate photosynthesis. Prevents excessive induction of non-photochemical quenching (NPQ) under continuous-light conditions. Indirectly promotes efficient inorganic carbon uptake into chloroplasts. This Olimarabidopsis pumila (Dwarf rocket) protein is Potassium/proton antiporter CemA.